A 150-amino-acid polypeptide reads, in one-letter code: HTH-type transcriptional regulator LrpA (150 aa).

The region spanning 5 to 66 (LDDIDRILVR…RINPEAVGHL (62 aa)) is the HTH asnC-type domain. Residues 24 to 43 (LSELATRAGLSVSAVQSRVR) constitute a DNA-binding region (H-T-H motif). Residues V100, G102, and E104 each contribute to the L-phenylalanine site.

In terms of assembly, homohexadecamer in the absence of any added ligand. Homooctamer. Tetramer of dimers. In the presence of phenylalanine, the hexadecamer dissociates into an octamer, which further dissociates partially into lower-order oligomers.

The DNA-binding activity of LrpA is modulated by interaction of LrpA with various effector molecules, including amino acids and vitamins. The DNA binding affinity is decreased by several amino acids, including phenylalanine, tyrosine, tryptophan, histidine, leucine and aspartate. Preferentially binds to aromatic amino acids. Besides amino acids, the binding affinity is also reduced by vitamins, including B1, B3, B6, VC, B7, B9, B12, VA and VK3. Transcriptional regulator that probably plays an important role in M.tuberculosis persistence. Regulates the expression of several genes, including lat, rsmG, whiB2, lsr2 and Rv2011c. Acts by binding directly to the promoter region of the target genes. This is HTH-type transcriptional regulator LrpA from Mycobacterium tuberculosis (strain ATCC 25618 / H37Rv).